The primary structure comprises 330 residues: Phenylalanine--tRNA ligase alpha subunit (330 aa).

E255 is a binding site for Mg(2+).

It belongs to the class-II aminoacyl-tRNA synthetase family. Phe-tRNA synthetase alpha subunit type 1 subfamily. In terms of assembly, tetramer of two alpha and two beta subunits. It depends on Mg(2+) as a cofactor.

The protein localises to the cytoplasm. It catalyses the reaction tRNA(Phe) + L-phenylalanine + ATP = L-phenylalanyl-tRNA(Phe) + AMP + diphosphate + H(+). This chain is Phenylalanine--tRNA ligase alpha subunit, found in Acinetobacter baumannii (strain AYE).